We begin with the raw amino-acid sequence, 176 residues long: MRLFVAVDVDDSIREKVKPILKELSGVSGVKAVEPENLHITLLFLGEVGEEKLARIEERLSEVTFQPFKISFEGVGAFPNPGSPRVVWIGVKEEGELTRLANSVYEKLKKLGFRRDKDFKAHLTVGRVKRKNPEVADIVRKYSSESFGEMEVRDFRLKQSILTPKGPIYKDLRVFE.

Histidine 39 functions as the Proton donor in the catalytic mechanism. 2 short sequence motifs (HXTX) span residues 39–42 (HITL) and 122–125 (HLTV). Histidine 122 serves as the catalytic Proton acceptor.

The protein belongs to the 2H phosphoesterase superfamily. ThpR family.

It carries out the reaction a 3'-end 2',3'-cyclophospho-ribonucleotide-RNA + H2O = a 3'-end 2'-phospho-ribonucleotide-RNA + H(+). Hydrolyzes RNA 2',3'-cyclic phosphodiester to an RNA 2'-phosphomonoester. This chain is RNA 2',3'-cyclic phosphodiesterase, found in Archaeoglobus fulgidus (strain ATCC 49558 / DSM 4304 / JCM 9628 / NBRC 100126 / VC-16).